Reading from the N-terminus, the 131-residue chain is Small ribosomal subunit protein uS8 (131 aa).

The protein belongs to the universal ribosomal protein uS8 family. In terms of assembly, part of the 30S ribosomal subunit. Contacts proteins S5 and S12.

Functionally, one of the primary rRNA binding proteins, it binds directly to 16S rRNA central domain where it helps coordinate assembly of the platform of the 30S subunit. This is Small ribosomal subunit protein uS8 from Cupriavidus necator (strain ATCC 17699 / DSM 428 / KCTC 22496 / NCIMB 10442 / H16 / Stanier 337) (Ralstonia eutropha).